Consider the following 329-residue polypeptide: Apolipoprotein E (329 aa).

Positions 1–18 (MKVLWAALVVALLAGCWA) are cleaved as a signal peptide. A run of 8 repeats spans residues 92–113 (TLME…EQLG), 114–135 (PMAS…ARLR), 136–157 (SDME…AMLG), 158–179 (QSTE…KRVL), 180–201 (RDAE…EGAE), 202–223 (RSVS…TRHA), 224–245 (KVDA…QQLR), and 246–267 (GRLE…EQME). The interval 92–267 (TLMEETMKEI…HLDEVREQME (176 aa)) is 8 X 22 AA approximate tandem repeats. Methionine 155 is subject to Methionine sulfoxide. Serine 159 carries the phosphoserine modification. Positions 170–180 (HMRKLRKRVLR) are LDL and other lipoprotein receptors binding. 174 to 177 (LRKR) is a heparin binding site. Residues 222–302 (HAKVDALATQ…GWFEPLVEDM (81 aa)) form a lipid-binding and lipoprotein association region. 241 to 248 (GQQLRGRL) provides a ligand contact to heparin. The homooligomerization stretch occupies residues 278-329 (NQMRQQAEPFQARLKGWFEPLVEDMQRQWAVLVEKVQAAVGTSPTTPPVETK). Positions 290–302 (RLKGWFEPLVEDM) are specificity for association with VLDL.

Belongs to the apolipoprotein A1/A4/E family. In terms of assembly, homotetramer. May interact with ABCA1; functionally associated with ABCA1 in the biogenesis of HDLs. May interact with APP/A4 amyloid-beta peptide; the interaction is extremely stable in vitro but its physiological significance is unclear. May interact with MAPT. May interact with MAP2. In the cerebrospinal fluid, interacts with secreted SORL1. Interacts with PMEL; this allows the loading of PMEL luminal fragment on ILVs to induce fibril nucleation. In terms of processing, APOE exists as multiple glycosylated and sialylated glycoforms within cells and in plasma. The extent of glycosylation and sialylation are tissue and context specific. Post-translationally, glycated in plasma VLDL. Phosphorylated by FAM20C in the extracellular medium.

The protein localises to the secreted. The protein resides in the extracellular space. It is found in the extracellular matrix. It localises to the extracellular vesicle. Its subcellular location is the endosome. The protein localises to the multivesicular body. APOE is an apolipoprotein, a protein associating with lipid particles, that mainly functions in lipoprotein-mediated lipid transport between organs via the plasma and interstitial fluids. APOE is a core component of plasma lipoproteins and is involved in their production, conversion and clearance. Apolipoproteins are amphipathic molecules that interact both with lipids of the lipoprotein particle core and the aqueous environment of the plasma. As such, APOE associates with chylomicrons, chylomicron remnants, very low density lipoproteins (VLDL) and intermediate density lipoproteins (IDL) but shows a preferential binding to high-density lipoproteins (HDL). It also binds a wide range of cellular receptors including the LDL receptor/LDLR, the LDL receptor-related proteins LRP1, LRP2 and LRP8 and the very low-density lipoprotein receptor/VLDLR that mediate the cellular uptake of the APOE-containing lipoprotein particles. Finally, APOE also has a heparin-binding activity and binds heparan-sulfate proteoglycans on the surface of cells, a property that supports the capture and the receptor-mediated uptake of APOE-containing lipoproteins by cells. A main function of APOE is to mediate lipoprotein clearance through the uptake of chylomicrons, VLDLs, and HDLs by hepatocytes. APOE is also involved in the biosynthesis by the liver of VLDLs as well as their uptake by peripheral tissues ensuring the delivery of triglycerides and energy storage in muscle, heart and adipose tissues. By participating in the lipoprotein-mediated distribution of lipids among tissues, APOE plays a critical role in plasma and tissues lipid homeostasis. APOE is also involved in two steps of reverse cholesterol transport, the HDLs-mediated transport of cholesterol from peripheral tissues to the liver, and thereby plays an important role in cholesterol homeostasis. First, it is functionally associated with ABCA1 in the biogenesis of HDLs in tissues. Second, it is enriched in circulating HDLs and mediates their uptake by hepatocytes. APOE also plays an important role in lipid transport in the central nervous system, regulating neuron survival and sprouting. This Arctocephalus gazella (Antarctic fur seal) protein is Apolipoprotein E (APOE).